The primary structure comprises 69 residues: Probable molybdenum-pterin-binding protein (69 aa).

The Mop domain maps to 2–68 (KISARNQLKG…IKATSVMVGV (67 aa)).

To C.pasteurianum MOP proteins.

In terms of biological role, binds one mole of molybdenum per mole of protein and contains a pterin. This chain is Probable molybdenum-pterin-binding protein, found in Haemophilus influenzae (strain ATCC 51907 / DSM 11121 / KW20 / Rd).